A 981-amino-acid polypeptide reads, in one-letter code: Anoctamin-3 (981 aa).

Polar residues predominate over residues 1–22; it reads MVHHSGSIQSFKQQKGMNISKS. The interval 1–33 is disordered; that stretch reads MVHHSGSIQSFKQQKGMNISKSEITKETSLKPS. At 1–403 the chain is on the cytoplasmic side; that stretch reads MVHHSGSIQS…LYFAWLGWYT (403 aa). Residues 404 to 424 form a helical membrane-spanning segment; it reads GMLIPAAIVGLCVFFYGLFTM. N-linked (GlcNAc...) asparagine glycans are attached at residues Asn425, Asn448, and Asn455. Over 425–469 the chain is Extracellular; sequence NNSQVSQEICKATEVFMCPLCDKNCSLQRLNDSCIYAKVTYLFDN. The chain crosses the membrane as a helical span at residues 470 to 490; the sequence is GGTVFFAIFMAIWATVFLEFW. Over 491 to 550 the chain is Cytoplasmic; that stretch reads KRRRSILTYTWDLIEWEEEEETLRPQFEAKYYKMEIVNPITGKPEPHQPSSDKVTRLLVS. The chain crosses the membrane as a helical span at residues 551 to 571; the sequence is VSGIFFMISLVITAVFGVVVY. Residues 572 to 592 are Extracellular-facing; sequence RLVVMEQFASFKWNFIKQYWQ. Residues 593-613 form a helical membrane-spanning segment; that stretch reads FATSAAAVCINFIIIMLLNLA. Residues 614-640 lie on the Cytoplasmic side of the membrane; that stretch reads YEKIAYLLTNLEYPRTESEWENSFALK. Residues 641 to 661 traverse the membrane as a helical segment; it reads MFLFQFVNLNSSIFYIAFFLG. Topologically, residues 662–761 are extracellular; the sequence is RFVGHPGKYN…MDEYLEMVLQ (100 aa). The helical transmembrane segment at 762 to 782 threads the bilayer; it reads FGFTTIFVAAFPLAPLLALLN. Residues 783 to 810 are Cytoplasmic-facing; the sequence is NIIEIRLDAYKFVTQWRRPLPARATDIG. A helical membrane pass occupies residues 811–831; that stretch reads IWLGILEGIGILAVITNAFVI. At 832–914 the chain is on the extracellular side; sequence AITSDYIPRF…QYWHILAARL (83 aa). N-linked (GlcNAc...) asparagine glycosylation is present at Asn866. A helical transmembrane segment spans residues 915 to 935; it reads AFIIVFEHLVFGIKSFIAYLI. At 936 to 981 the chain is on the cytoplasmic side; it reads PDVPKGLHDRIRREKYLVQEMMYEAELEHLQQQRRKSGQPVHHEWP.

Belongs to the anoctamin family. Interacts with KCNT1/Slack. As to expression, highly expressed in the forebrain striatum.

The protein localises to the cell membrane. It carries out the reaction a 1,2-diacyl-sn-glycero-3-phosphocholine(in) = a 1,2-diacyl-sn-glycero-3-phosphocholine(out). It catalyses the reaction a beta-D-galactosyl-(1&lt;-&gt;1')-N-acylsphing-4-enine(out) = a beta-D-galactosyl-(1&lt;-&gt;1')-N-acylsphing-4-enine(in). Functionally, has calcium-dependent phospholipid scramblase activity; scrambles phosphatidylcholine and galactosylceramide. Seems to act as potassium channel regulator and may inhibit pain signaling; can facilitate KCNT1/Slack channel activity by promoting its full single-channel conductance at very low sodium concentrations and by increasing its sodium sensitivity. Does not exhibit calcium-activated chloride channel (CaCC) activity. The sequence is that of Anoctamin-3 (ANO3) from Homo sapiens (Human).